Consider the following 360-residue polypeptide: Phosphoserine aminotransferase (360 aa).

Arginine 42 serves as a coordination point for L-glutamate. Positions 102, 152, 171, and 194 each coordinate pyridoxal 5'-phosphate. Lysine 195 bears the N6-(pyridoxal phosphate)lysine mark. 237-238 (NT) is a binding site for pyridoxal 5'-phosphate.

This sequence belongs to the class-V pyridoxal-phosphate-dependent aminotransferase family. SerC subfamily. Homodimer. Pyridoxal 5'-phosphate serves as cofactor.

The protein resides in the cytoplasm. It carries out the reaction O-phospho-L-serine + 2-oxoglutarate = 3-phosphooxypyruvate + L-glutamate. The catalysed reaction is 4-(phosphooxy)-L-threonine + 2-oxoglutarate = (R)-3-hydroxy-2-oxo-4-phosphooxybutanoate + L-glutamate. It participates in amino-acid biosynthesis; L-serine biosynthesis; L-serine from 3-phospho-D-glycerate: step 2/3. It functions in the pathway cofactor biosynthesis; pyridoxine 5'-phosphate biosynthesis; pyridoxine 5'-phosphate from D-erythrose 4-phosphate: step 3/5. Functionally, catalyzes the reversible conversion of 3-phosphohydroxypyruvate to phosphoserine and of 3-hydroxy-2-oxo-4-phosphonooxybutanoate to phosphohydroxythreonine. This Coxiella burnetii (strain Dugway 5J108-111) protein is Phosphoserine aminotransferase.